Here is a 159-residue protein sequence, read N- to C-terminus: 2-C-methyl-D-erythritol 2,4-cyclodiphosphate synthase (159 aa).

The a divalent metal cation site is built by Asp-10 and His-12. 4-CDP-2-C-methyl-D-erythritol 2-phosphate contacts are provided by residues 10 to 12 (DVH) and 36 to 37 (HS). A divalent metal cation is bound at residue His-44. 4-CDP-2-C-methyl-D-erythritol 2-phosphate-binding positions include 58-60 (DIG), 134-137 (TTTE), Phe-141, and Arg-144.

The protein belongs to the IspF family. In terms of assembly, homotrimer. The cofactor is a divalent metal cation.

The catalysed reaction is 4-CDP-2-C-methyl-D-erythritol 2-phosphate = 2-C-methyl-D-erythritol 2,4-cyclic diphosphate + CMP. It functions in the pathway isoprenoid biosynthesis; isopentenyl diphosphate biosynthesis via DXP pathway; isopentenyl diphosphate from 1-deoxy-D-xylulose 5-phosphate: step 4/6. In terms of biological role, involved in the biosynthesis of isopentenyl diphosphate (IPP) and dimethylallyl diphosphate (DMAPP), two major building blocks of isoprenoid compounds. Catalyzes the conversion of 4-diphosphocytidyl-2-C-methyl-D-erythritol 2-phosphate (CDP-ME2P) to 2-C-methyl-D-erythritol 2,4-cyclodiphosphate (ME-CPP) with a corresponding release of cytidine 5-monophosphate (CMP). This is 2-C-methyl-D-erythritol 2,4-cyclodiphosphate synthase from Bacteroides fragilis (strain ATCC 25285 / DSM 2151 / CCUG 4856 / JCM 11019 / LMG 10263 / NCTC 9343 / Onslow / VPI 2553 / EN-2).